The sequence spans 252 residues: Glycerol-3-phosphate acyltransferase (252 aa).

6 consecutive transmembrane segments (helical) span residues 6-26 (SVAM…YLIG), 66-86 (ILTL…TYII), 104-124 (AILV…PIFF), 140-160 (ITID…ILLI), 164-184 (MSLS…IPGI), and 204-224 (VIKG…ILIY).

It belongs to the PlsY family. Probably interacts with PlsX.

It localises to the cell membrane. The enzyme catalyses an acyl phosphate + sn-glycerol 3-phosphate = a 1-acyl-sn-glycero-3-phosphate + phosphate. It participates in lipid metabolism; phospholipid metabolism. In terms of biological role, catalyzes the transfer of an acyl group from acyl-phosphate (acyl-PO(4)) to glycerol-3-phosphate (G3P) to form lysophosphatidic acid (LPA). This enzyme utilizes acyl-phosphate as fatty acyl donor, but not acyl-CoA or acyl-ACP. This Ureaplasma urealyticum serovar 10 (strain ATCC 33699 / Western) protein is Glycerol-3-phosphate acyltransferase.